Reading from the N-terminus, the 784-residue chain is Toll-like receptor 2 (784 aa).

An N-terminal signal peptide occupies residues 1–20 (MPHTLWMVWVLGVIISLSKE). Topologically, residues 21–587 (ESSNQASLSC…VRLSVSECHR (567 aa)) are extracellular. A disulfide bridge links C30 with C36. LRR repeat units lie at residues 54–77 (VKSL…RCVN), 78–101 (LQAL…SLGS), 102–125 (LEHL…PLSS), 126–150 (LTFL…HLTK), 151–175 (LQIL…GLTF), 176–199 (LEEL…SIQN), 200–223 (VSHL…VTSS), 224–250 (VECL…TNSL), 251–278 (IKKF…QISG), 279–308 (LLEL…DPGK), 309–337 (VETL…LTER), 338–361 (VKRI…HLKS), 362–388 (LEYL…AWPS), 389–414 (LQTL…TLKN), 415–437 (LTNV…WPEK), 438–457 (MKYL…CIPK), 458–478 (TLEI…NLPQ), 479–500 (LKEL…LLPM), and 501–524 (LLVL…SFHT). N114 is a glycosylation site (N-linked (GlcNAc...) asparagine). N-linked (GlcNAc...) asparagine glycosylation occurs at N199. C353 and C382 form a disulfide bridge. N414 carries N-linked (GlcNAc...) asparagine glycosylation. Residues C432 and C454 are joined by a disulfide bond. N-linked (GlcNAc...) asparagine glycosylation is present at N442. The LRRCT domain maps to 525-579 (LKTLEAGGNNFICSCEFLSFTQEQQALAKVLIDWPANYLCDSPSHVRGQQVQDVR). A helical membrane pass occupies residues 588–608 (TALVSGMCCALFLLILLTGVL). The Cytoplasmic segment spans residues 609 to 784 (CHRFHGLWYM…WVNLRAAIKS (176 aa)). Residues 639–782 (ICYDAFVSYS…GFWVNLRAAI (144 aa)) enclose the TIR domain. K754 is covalently cross-linked (Glycyl lysine isopeptide (Lys-Gly) (interchain with G-Cter in ubiquitin)). The ATG16L1-binding motif motif lies at 761-778 (YLEWPMDEAQREGFWVNL).

This sequence belongs to the Toll-like receptor family. As to quaternary structure, interacts with LY96, TLR1 and TLR6 (via extracellular domain). TLR2 seems to exist in heterodimers with either TLR1 or TLR6 before stimulation by the ligand. The heterodimers form bigger oligomers in response to their corresponding ligands as well as further heterotypic associations with other receptors such as CD14 and/or CD36. Binds MYD88 (via TIR domain). Interacts with TICAM1. Interacts with CNPY3. Interacts with ATG16L1. Interacts with PPP1R11. Interacts with TICAM2. Interacts with TIRAP. Ubiquitinated at Lys-754 by PPP1R11, leading to its degradation. Deubiquitinated by USP2. Post-translationally, glycosylation of Asn-442 is critical for secretion of the N-terminal ectodomain of TLR2.

The protein resides in the membrane. Its subcellular location is the cytoplasmic vesicle. It localises to the phagosome membrane. The protein localises to the membrane raft. Cooperates with LY96 to mediate the innate immune response to bacterial lipoproteins and other microbial cell wall components. Cooperates with TLR1 or TLR6 to mediate the innate immune response to bacterial lipoproteins or lipopeptides. Acts via MYD88 and TRAF6, leading to NF-kappa-B activation, cytokine secretion and the inflammatory response. May also promote apoptosis in response to lipoproteins. Forms activation clusters composed of several receptors depending on the ligand, these clusters trigger signaling from the cell surface and subsequently are targeted to the Golgi in a lipid-raft dependent pathway. Forms the cluster TLR2:TLR6:CD14:CD36 in response to diacylated lipopeptides and TLR2:TLR1:CD14 in response to triacylated lipopeptides. This Gorilla gorilla gorilla (Western lowland gorilla) protein is Toll-like receptor 2 (TLR2).